A 597-amino-acid chain; its full sequence is Probable translation initiation factor IF-2 (597 aa).

The tr-type G domain occupies 8–225 (LRQPIVVVLG…LLAGLTQQYL (218 aa)). The interval 17–24 (GHVDHGKT) is G1. 17–24 (GHVDHGKT) provides a ligand contact to GTP. Residues 42–46 (EMTQE) form a G2 region. Positions 81 to 84 (DTPG) are G3. Residues 81–85 (DTPGH) and 135–138 (NKID) contribute to the GTP site. The G4 stretch occupies residues 135–138 (NKID). Residues 203 to 205 (SGK) form a G5 region.

This sequence belongs to the TRAFAC class translation factor GTPase superfamily. Classic translation factor GTPase family. IF-2 subfamily.

Functionally, function in general translation initiation by promoting the binding of the formylmethionine-tRNA to ribosomes. Seems to function along with eIF-2. The polypeptide is Probable translation initiation factor IF-2 (Metallosphaera sedula (strain ATCC 51363 / DSM 5348 / JCM 9185 / NBRC 15509 / TH2)).